We begin with the raw amino-acid sequence, 358 residues long: Vesicular integral-membrane protein VIP36 (358 aa).

An N-terminal signal peptide occupies residues 1–46 (MAAEAWLWRWGWGWGQRCPGRPGLPGPGPSPTTFLHLLLLLGPVAA). At 47–324 (DITDGNSEHL…FRNGPLTGWR (278 aa)) the chain is on the lumenal side. One can recognise an L-type lectin-like domain in the interval 54–278 (EHLKREHSLI…DIISIKLFQL (225 aa)). Positions 98 and 133 each coordinate a carbohydrate. Residues Asp164, Tyr166, and Asn168 each contribute to the Ca(2+) site. 166–168 (YPN) lines the a carbohydrate pocket. The N-linked (GlcNAc...) asparagine glycan is linked to Asn185. His192 is an a carbohydrate binding site. Residue Asp195 participates in Ca(2+) binding. An intrachain disulfide couples Cys204 to Cys241. An a carbohydrate-binding site is contributed by 262 to 264 (GDL). A helical membrane pass occupies residues 325-347 (VFLLLLCALLGVVVCAVVGAVVF). The Cytoplasmic portion of the chain corresponds to 348-358 (QKRQERNKRFY).

Ca(2+) serves as cofactor.

The protein localises to the golgi apparatus membrane. Its function is as follows. Plays a role as an intracellular lectin in the early secretory pathway. Interacts with N-acetyl-D-galactosamine and high-mannose type glycans and may also bind to O-linked glycans. Involved in the transport and sorting of glycoproteins carrying high mannose-type glycans. This chain is Vesicular integral-membrane protein VIP36 (Lman2), found in Mus musculus (Mouse).